The chain runs to 1003 residues: Methyl-CpG-binding domain protein 6 (1003 aa).

An MBD domain is found at 11–81; that stretch reads DRAGGPVATS…KVFNFDPLAP (71 aa). Residues 57 to 68 form a required for interaction with ASXL1/2/3 region; sequence DGTCKCGLECPL. Disordered regions lie at residues 120–219, 238–664, and 683–1003; these read TCSH…PPPA, VPSD…PLLF, and ATLD…KLAP. Pro residues-rich tracts occupy residues 140 to 155 and 268 to 287; these read PGPP…PPTT and TPPP…PASQ. Composition is skewed to low complexity over residues 297–308, 319–328, and 348–361; these read LPLVLGPLGGAP, LASSLLSAAA, and AQAP…SLRP. Positions 391–407 are enriched in pro residues; the sequence is APAPVPQPFSLPEPSQP. Low complexity predominate over residues 408-426; the sequence is ILPSVLSLLGLPTPGPSHS. Pro residues predominate over residues 439–456; the sequence is LPPPPTLSSGSPPQPRHP. Low complexity-rich tracts occupy residues 460–498 and 531–548; these read SLPG…PSEG and GAGF…LSLG. Positions 570–589 are enriched in pro residues; sequence QPPPEPLLPPPGGPGPPLAP. The span at 590–602 shows a compositional bias: low complexity; it reads GEPEGPSLLVASL. Over residues 603-617 the composition is skewed to pro residues; it reads LPPPPSDLLPPPSAP. Residues 618-633 are compositionally biased toward low complexity; that stretch reads PSNLLASFLPLLALGP. Gly residues predominate over residues 635 to 649; it reads AGDGEGSAEGAGGPS. Residues 650–662 show a composition bias toward low complexity; sequence GEPFSGLGDLSPL. The segment covering 707-718 has biased composition (polar residues); it reads TSSVTTATTDPG. 3 stretches are compositionally biased toward low complexity: residues 732–761, 768–778, and 788–798; these read PPQL…LPSL, LLSGQLGLQLL, and SEASSPLACLL. A compositionally biased stretch (pro residues) spans 805 to 817; sequence PEQPEAPCLPPES. The span at 818 to 837 shows a compositional bias: low complexity; sequence PASALEPEPARPPLSALAPP. Over residues 947–958 the composition is skewed to basic residues; it reads RKSRRGRRRKYN. The segment covering 959 to 969 has biased composition (polar residues); sequence PTRNSNSSRQD. Positions 989–1003 are enriched in basic residues; the sequence is RPGRPAKNKRRKLAP.

Core component of the polycomb repressive deubiquitinase (PR-DUB) complex, at least composed of BAP1, one of ASXL1, ASXL2 or (probably) ASXL3, and one of MBD5 or MBD6. Distinct combinations of ASXL and MBD proteins may preferentially bind specific histone modification marks. The PR-DUB core associates with a number of accessory proteins, including FOXK1, FOXK2, KDM1B, HCFC1 and OGT; KDM1B specifically associates with ASXL2 PR-DUB complexes. Interacts (via MBD domain) with ASXL1, ASXL2 and ASXL3 (via PHD domain); the interaction is probably direct, mediates association with other PR-DUB complex core components.

It localises to the nucleus. The protein resides in the chromosome. Non-catalytic component of the polycomb repressive deubiquitinase (PR-DUB) complex, a complex that specifically mediates deubiquitination of histone H2A monoubiquitinated at 'Lys-120' (H2AK119ub1). Important for stability of PR-DUB components and stimulating its ubiquitinase activity. As part of the PR-DUB complex, associates with chromatin enriched in histone marks H3K4me1, H3K4me3, and H3K27Ac, but not in H3K27me3. MBD5 and MBD6 containing complexes associate with distinct chromatin regions enriched in genes involved in different pathways. Heterochromatin recruitment is not mediated by DNA methylation. The PR-DUB complex is an epigenetic regulator of gene expression, including genes involved in development, cell communication, signaling, cell proliferation and cell viability; may promote cancer cell growth. In Homo sapiens (Human), this protein is Methyl-CpG-binding domain protein 6 (MBD6).